Consider the following 351-residue polypeptide: Probable dual-specificity RNA methyltransferase RlmN (351 aa).

The active-site Proton acceptor is glutamate 98. Residues 104–332 (TQKRLTVCVS…ASIRRSRGLD (229 aa)) enclose the Radical SAM core domain. The cysteines at positions 111 and 337 are disulfide-linked. [4Fe-4S] cluster is bound by residues cysteine 118, cysteine 122, and cysteine 125. Residues 165-166 (GE), serine 195, 218-220 (SLH), and asparagine 294 contribute to the S-adenosyl-L-methionine site. Cysteine 337 functions as the S-methylcysteine intermediate in the catalytic mechanism.

This sequence belongs to the radical SAM superfamily. RlmN family. [4Fe-4S] cluster is required as a cofactor.

It is found in the cytoplasm. It carries out the reaction adenosine(2503) in 23S rRNA + 2 reduced [2Fe-2S]-[ferredoxin] + 2 S-adenosyl-L-methionine = 2-methyladenosine(2503) in 23S rRNA + 5'-deoxyadenosine + L-methionine + 2 oxidized [2Fe-2S]-[ferredoxin] + S-adenosyl-L-homocysteine. It catalyses the reaction adenosine(37) in tRNA + 2 reduced [2Fe-2S]-[ferredoxin] + 2 S-adenosyl-L-methionine = 2-methyladenosine(37) in tRNA + 5'-deoxyadenosine + L-methionine + 2 oxidized [2Fe-2S]-[ferredoxin] + S-adenosyl-L-homocysteine. Its function is as follows. Specifically methylates position 2 of adenine 2503 in 23S rRNA and position 2 of adenine 37 in tRNAs. The sequence is that of Probable dual-specificity RNA methyltransferase RlmN from Acaryochloris marina (strain MBIC 11017).